Reading from the N-terminus, the 897-residue chain is Isoleucine--tRNA ligase (897 aa).

A 'HIGH' region motif is present at residues 59–69 (PYANGDIHVGH). Position 553 (glutamate 553) interacts with L-isoleucyl-5'-AMP. The 'KMSKS' region motif lies at 594–598 (KMSKS). Residue lysine 597 coordinates ATP. Cysteine 866, cysteine 869, cysteine 883, and cysteine 886 together coordinate Zn(2+).

It belongs to the class-I aminoacyl-tRNA synthetase family. IleS type 1 subfamily. As to quaternary structure, monomer. Requires Zn(2+) as cofactor.

The protein resides in the cytoplasm. It catalyses the reaction tRNA(Ile) + L-isoleucine + ATP = L-isoleucyl-tRNA(Ile) + AMP + diphosphate. In terms of biological role, catalyzes the attachment of isoleucine to tRNA(Ile). As IleRS can inadvertently accommodate and process structurally similar amino acids such as valine, to avoid such errors it has two additional distinct tRNA(Ile)-dependent editing activities. One activity is designated as 'pretransfer' editing and involves the hydrolysis of activated Val-AMP. The other activity is designated 'posttransfer' editing and involves deacylation of mischarged Val-tRNA(Ile). The sequence is that of Isoleucine--tRNA ligase from Mycoplasmopsis synoviae (strain 53) (Mycoplasma synoviae).